A 442-amino-acid chain; its full sequence is ORC1-type DNA replication protein 8 (442 aa).

ATP is bound by residues valine 66 to alanine 70 and tyrosine 218.

This sequence belongs to the CDC6/cdc18 family.

Its function is as follows. Involved in regulation of DNA replication. This Haloarcula marismortui (strain ATCC 43049 / DSM 3752 / JCM 8966 / VKM B-1809) (Halobacterium marismortui) protein is ORC1-type DNA replication protein 8 (cdc6h).